A 190-amino-acid polypeptide reads, in one-letter code: MVGANIPAELAALPIESLIGKPLEAAVRAQAFAAMTTARFVQEVGLDDDGNVKTVTFKFKRKELDPETGDVTDVDTTVEAPLLTILPVPFIRIKDMTVHFNFTIKTSAQDKTQHDFASKLTAKAGWGWGSVKLTASYGFKKESRSQVDRSSELDITVNAVQDEMPEGMRTLLSLLKESIAPAGASGGGTG.

This is an uncharacterized protein from Archaeoglobus fulgidus (strain ATCC 49558 / DSM 4304 / JCM 9628 / NBRC 100126 / VC-16).